Consider the following 124-residue polypeptide: Small ribosomal subunit protein bS16 (124 aa).

The segment at 88–124 (VPEQTKQAQPKAKAQERLREAEEKARAAAEAAASAEG) is disordered. Residues 100–114 (KAQERLREAEEKARA) are compositionally biased toward basic and acidic residues. The span at 115–124 (AAEAAASAEG) shows a compositional bias: low complexity.

Belongs to the bacterial ribosomal protein bS16 family.

This Rhodospirillum rubrum (strain ATCC 11170 / ATH 1.1.1 / DSM 467 / LMG 4362 / NCIMB 8255 / S1) protein is Small ribosomal subunit protein bS16.